Reading from the N-terminus, the 148-residue chain is MKYQQLENLEAGWKWTYLVKKWKEEEAITCHIDSSEAEAAIQSLLTIEHEPTKVIEWIDKHMSPALENKLKQAIRAKRKRHFNAEQVHTRKKSIDLDYRVWEKLAEKSQELGSTLSDTIEYLLSESNRTETVTKTVSDIRKDLSDLLD.

The protein belongs to the MatP family. In terms of assembly, homodimer.

The protein localises to the cytoplasm. Its function is as follows. Required for spatial organization of the terminus region of the chromosome (Ter macrodomain) during the cell cycle. Prevents early segregation of duplicated Ter macrodomains during cell division. Binds specifically to matS, which is a 13 bp signature motif repeated within the Ter macrodomain. This chain is Macrodomain Ter protein, found in Photobacterium profundum (strain SS9).